Here is an 87-residue protein sequence, read N- to C-terminus: Small ribosomal subunit protein bS20 (87 aa).

The protein belongs to the bacterial ribosomal protein bS20 family.

In terms of biological role, binds directly to 16S ribosomal RNA. The polypeptide is Small ribosomal subunit protein bS20 (Alkaliphilus oremlandii (strain OhILAs) (Clostridium oremlandii (strain OhILAs))).